Reading from the N-terminus, the 615-residue chain is Pentatricopeptide repeat-containing protein At2g25580 (615 aa).

Residues 40-98 (FGNSNDSSEMNPREGYNGRIQNRTGSSGEVSESIHTQSQSLGSNQGRNEQSWKQSPSLS) form a disordered region. Positions 58 to 98 (RIQNRTGSSGEVSESIHTQSQSLGSNQGRNEQSWKQSPSLS) are enriched in polar residues. 4 PPR repeats span residues 288–318 (DLSSNHVLLEMYSNCGLANEAASVFEKMSEK), 319–353 (NLETWCIIIRCFAKNGFGEDAIDMFSRFKEEGNIP), 354–389 (DGQLFRGIFYACGMLGDVDEGLLHFESMSRDYGIAP), and 390–420 (SIEDYVSLVEMYALPGFLDEALEFVERMPME). The segment at 490–520 (SSMQEFRAGDTNLPENDELFQLLRNLKMHMV) is type E(+) motif. Residues 521-615 (EVGYVAETRM…NGACTCKDYW (95 aa)) are type DYW motif.

The protein belongs to the PPR family. PCMP-H subfamily.

This Arabidopsis thaliana (Mouse-ear cress) protein is Pentatricopeptide repeat-containing protein At2g25580 (PCMP-H75).